The primary structure comprises 198 residues: Syndecan-4 (198 aa).

An N-terminal signal peptide occupies residues 1–18 (MAPARLFALLLFFVGGVA). Over 19–145 (ESIRETEVID…QGSNIFERTE (127 aa)) the chain is Extracellular. Residues Ser-39, Ser-61, and Ser-63 are each glycosylated (O-linked (Xyl...) (glycosaminoglycan) serine). The O-linked (Xyl...) (chondroitin sulfate) serine glycan is linked to Ser-95. The helical transmembrane segment at 146–170 (VLAALIVGGIVGILFAVFLILLLMY) threads the bilayer. Over 171–198 (RMKKKDEGSYDLGKKPIYKKAPTNEFYA) the chain is Cytoplasmic.

The protein belongs to the syndecan proteoglycan family. As to quaternary structure, homodimer. Interacts (via its cytoplasmic domain) with GIPC (via its PDZ domain). Interacts (via its cytoplasmic domain) with NUDT16L1. Interacts with CDCP1 and SDCBP. Interacts with DNM2; this interaction is markedly enhanced at focal ahesion site upon induction of focal adhesions and stress-fiber formation. In terms of processing, shedding is enhanced by a number of factors such as heparanase, thrombin or EGF. Also by stress and wound healing. PMA-mediated shedding is inhibited by TIMP3. O-glycosylated; contains both chondroitin sulfate and heparan sulfate. Ser-39, Ser-61 and Ser-63 can all be modified by either chondroitin sulfate or heparan sulfate, and the protein exists in forms that contain only chondroitin sulfate, only heparan sulfate and both chondroitin sulfate and heparan sulfate. In terms of tissue distribution, detected in fibroblasts (at protein level). Also expressed in epithelial cells.

Its subcellular location is the membrane. The protein resides in the secreted. Functionally, cell surface proteoglycan which regulates exosome biogenesis in concert with SDCBP and PDCD6IP. This is Syndecan-4 from Homo sapiens (Human).